The chain runs to 257 residues: Pimeloyl-[acyl-carrier protein] methyl ester esterase (257 aa).

The 225-residue stretch at 16 to 240 (LVLIHGWGMN…EQASHAPFIS (225 aa)) folds into the AB hydrolase-1 domain. Substrate is bound by residues Trp22, 82 to 83 (SL), and 143 to 147 (FMALQ). The active-site Nucleophile is Ser82. Active-site residues include Asp207 and His235. Position 235 (His235) interacts with substrate.

It belongs to the AB hydrolase superfamily. Carboxylesterase BioH family. As to quaternary structure, monomer.

The protein localises to the cytoplasm. The catalysed reaction is 6-carboxyhexanoyl-[ACP] methyl ester + H2O = 6-carboxyhexanoyl-[ACP] + methanol + H(+). The protein operates within cofactor biosynthesis; biotin biosynthesis. The physiological role of BioH is to remove the methyl group introduced by BioC when the pimeloyl moiety is complete. It allows to synthesize pimeloyl-ACP via the fatty acid synthetic pathway through the hydrolysis of the ester bonds of pimeloyl-ACP esters. The polypeptide is Pimeloyl-[acyl-carrier protein] methyl ester esterase (Aliivibrio fischeri (strain MJ11) (Vibrio fischeri)).